The chain runs to 912 residues: uncharacterized protein (912 aa).

2 stretches are compositionally biased toward basic and acidic residues: residues 20-32 (IERLREQGRAEPA) and 39-67 (HEYEHTQGSRSHSSKDGSRKDRMSSEDKT). The segment at 20–91 (IERLREQGRA…KPTLPQPETD (72 aa)) is disordered. Positions 68-77 (RHKKLKHRSR) are enriched in basic residues.

This is an uncharacterized protein from Penicillium chrysogenum virus (isolate Caston/2003) (PcV).